Here is a 218-residue protein sequence, read N- to C-terminus: N-(5'-phosphoribosyl)anthranilate isomerase (218 aa).

The protein belongs to the TrpF family.

The enzyme catalyses N-(5-phospho-beta-D-ribosyl)anthranilate = 1-(2-carboxyphenylamino)-1-deoxy-D-ribulose 5-phosphate. It participates in amino-acid biosynthesis; L-tryptophan biosynthesis; L-tryptophan from chorismate: step 3/5. This Bordetella parapertussis (strain 12822 / ATCC BAA-587 / NCTC 13253) protein is N-(5'-phosphoribosyl)anthranilate isomerase.